The sequence spans 208 residues: 28 kDa heat- and acid-stable phosphoprotein homolog (208 aa).

2 disordered regions span residues 1–133 (MAGG…VTKK) and 145–208 (LSRR…LGLA). Basic and acidic residues predominate over residues 16 to 44 (FGRDYERSKGKISRDRVYDEEDIIKRNQE). Low complexity-rich tracts occupy residues 52-69 (GSES…NKSK) and 84-100 (RNPN…PTTK). A compositionally biased stretch (acidic residues) spans 105–121 (SDSEDDSDKESDSEDEI). The stretch at 137–206 (INVNAKVELS…EKMAERRRLG (70 aa)) forms a coiled coil. Basic and acidic residues-rich tracts occupy residues 145–154 (LSRREKEELA) and 162–208 (QNEK…LGLA).

It belongs to the PDAP1 family.

The chain is 28 kDa heat- and acid-stable phosphoprotein homolog from Dictyostelium discoideum (Social amoeba).